The sequence spans 374 residues: MGEDFVVTPWEVRGKVDYEKLLRQFGAKPLTAEEVALLEKYAGDVHPLIKRGFFYAHRDFDFILKWHGEGRPWALYTGRGPSGPVHIGHMVPWILLKWFSDKFGVEVYFQMTDDEKFFDDPEMKLEEATGWAYENALDVIALGFGPDKLHLIVDTKDIAPLYPIAVRVAKKLTWNTVKATFGFTDSSNIGLIFYPSLQIAVAFLPTELKKEPTPVLIPCAIDQDPYFRLARDIADSLSYPKPTTLYSKFIMALTGESKMSASNPDSAIYTMDDDKTVKHKILNAFTGGRPTAEEQRKYGGNPDICPVFHYHMLFDPDDASVEKIRQDCKSGALLCGECKLKLHEKISKFLKEHRERREKARGKVDEYRLSVKLK.

Residues proline 81 to histidine 89 carry the 'HIGH' region motif. A 'KMSKS' region motif is present at residues lysine 258–serine 262.

Belongs to the class-I aminoacyl-tRNA synthetase family.

The protein localises to the cytoplasm. It carries out the reaction tRNA(Trp) + L-tryptophan + ATP = L-tryptophyl-tRNA(Trp) + AMP + diphosphate + H(+). The protein is Tryptophan--tRNA ligase of Pyrobaculum arsenaticum (strain DSM 13514 / JCM 11321 / PZ6).